We begin with the raw amino-acid sequence, 344 residues long: MPVDVASPAGKTVCVTGAGGYIASWIVKILLERGYTVKGTVRNPDDPKNTHLRELEGGKERLILCKADLQDYEALKAAIDGCDGVFHTASPVTDDPEQMVEPAVNGAKFVINAAAEAKVKRVVITSSIGAVYMDPNRDPEAVVDESCWSDLDFCKNTKNWYCYGKMVAEQAAWETAKEKGVDLVVLNPVLVLGPPLQPTINASLYHVLKYLTGSAKTYANLTQAYVDVRDVALAHVLVYEAPSASGRYLLAESARHRGEVVEILAKLFPEYPLPTKCKDEKNPRAKPYKFTNQKIKDLGLEFTSTKQSLYDTVKSLQEKGHLAPPPPPPSASQESVENGIKIGS.

Residue serine 7 is modified to Phosphoserine. NADP(+) is bound by residues 17-23, arginine 42, lysine 48, 68-69, 88-90, tyrosine 161, lysine 165, 188-191, and serine 203; these read GAGGYIA, DL, TAS, and PVLV. Cysteine 154 and cysteine 162 form a disulfide bridge. Lysine 165 functions as the Proton donor in the catalytic mechanism. The interval 317–344 is disordered; that stretch reads QEKGHLAPPPPPPSASQESVENGIKIGS.

This sequence belongs to the NAD(P)-dependent epimerase/dehydratase family. Dihydroflavonol-4-reductase subfamily. Expressed in leaves, stems and flowers.

It carries out the reaction (E)-cinnamaldehyde + NADP(+) + CoA = (E)-cinnamoyl-CoA + NADPH + H(+). It participates in aromatic compound metabolism; phenylpropanoid biosynthesis. In terms of biological role, involved in the latter stages of lignin biosynthesis. Catalyzes one of the last steps of monolignol biosynthesis, the conversion of cinnamoyl-CoAs into their corresponding cinnamaldehydes. In Arabidopsis thaliana (Mouse-ear cress), this protein is Cinnamoyl-CoA reductase 1.